Consider the following 335-residue polypeptide: Biotin synthase (335 aa).

The Radical SAM core domain maps to 50 to 279; that stretch reads ADIQRAALLS…KARVRLSAGR (230 aa). Cys-65, Cys-69, and Cys-72 together coordinate [4Fe-4S] cluster. Positions 110, 142, 202, and 274 each coordinate [2Fe-2S] cluster.

Belongs to the radical SAM superfamily. Biotin synthase family. In terms of assembly, homodimer. It depends on [4Fe-4S] cluster as a cofactor. The cofactor is [2Fe-2S] cluster.

It carries out the reaction (4R,5S)-dethiobiotin + (sulfur carrier)-SH + 2 reduced [2Fe-2S]-[ferredoxin] + 2 S-adenosyl-L-methionine = (sulfur carrier)-H + biotin + 2 5'-deoxyadenosine + 2 L-methionine + 2 oxidized [2Fe-2S]-[ferredoxin]. It functions in the pathway cofactor biosynthesis; biotin biosynthesis; biotin from 7,8-diaminononanoate: step 2/2. Catalyzes the conversion of dethiobiotin (DTB) to biotin by the insertion of a sulfur atom into dethiobiotin via a radical-based mechanism. This is Biotin synthase from Methylorubrum extorquens (strain CM4 / NCIMB 13688) (Methylobacterium extorquens).